The primary structure comprises 143 residues: Large ribosomal subunit protein uL15 (143 aa).

A disordered region spans residues 1–54 (MELNSIKPADGAKHAARRVGRGIGSGLGKTAGRGHKGQKSRSGGYHKVGFEGGQ). Residues 21 to 31 (RGIGSGLGKTA) are compositionally biased toward gly residues.

The protein belongs to the universal ribosomal protein uL15 family. Part of the 50S ribosomal subunit.

In terms of biological role, binds to the 23S rRNA. The protein is Large ribosomal subunit protein uL15 of Acidovorax ebreus (strain TPSY) (Diaphorobacter sp. (strain TPSY)).